A 226-amino-acid chain; its full sequence is Ribonuclease 3 (226 aa).

Residues 6–128 form the RNase III domain; it reads INKLQRKLGY…LIGGVFLDSD (123 aa). E41 is a binding site for Mg(2+). Residue D45 is part of the active site. Mg(2+) contacts are provided by D114 and E117. E117 is an active-site residue. The DRBM domain occupies 155–225; the sequence is DPKTRLQEYL…AEQALIKLGL (71 aa).

It belongs to the ribonuclease III family. Homodimer. Requires Mg(2+) as cofactor.

Its subcellular location is the cytoplasm. The catalysed reaction is Endonucleolytic cleavage to 5'-phosphomonoester.. Functionally, digests double-stranded RNA. Involved in the processing of primary rRNA transcript to yield the immediate precursors to the large and small rRNAs (23S and 16S). Processes some mRNAs, and tRNAs when they are encoded in the rRNA operon. Processes pre-crRNA and tracrRNA of type II CRISPR loci if present in the organism. The polypeptide is Ribonuclease 3 (rnc) (Pantoea ananatis (strain LMG 20103)).